The chain runs to 571 residues: Plastidial pyruvate kinase 3, chloroplastic (571 aa).

The transit peptide at 1–55 (MAAYGQISSGMTVDPQVLSSSRNIGVSLSPLRRTLIGAGVRSTSISLRQCSLSVR) directs the protein to the chloroplast. Residue R129 coordinates substrate. Residues N131, S133, D164, and T165 each contribute to the K(+) site. 131–134 (NMSH) lines the ATP pocket. Residue R171 coordinates ATP. K314 contacts substrate. Residue E316 participates in Mg(2+) binding. The substrate site is built by G339, D340, and T372. Position 340 (D340) interacts with Mg(2+).

It belongs to the pyruvate kinase family. In terms of assembly, oligomer of alpha and beta subunits. Mg(2+) serves as cofactor. K(+) is required as a cofactor. In terms of tissue distribution, expressed at low levels in roots, leaves, inflorescences, siliques, pollen, seeds and flowers.

It is found in the plastid. It localises to the chloroplast stroma. It carries out the reaction pyruvate + ATP = phosphoenolpyruvate + ADP + H(+). The protein operates within carbohydrate degradation; glycolysis; pyruvate from D-glyceraldehyde 3-phosphate: step 5/5. Required for plastidial pyruvate kinase activity. The chain is Plastidial pyruvate kinase 3, chloroplastic (PKP3) from Arabidopsis thaliana (Mouse-ear cress).